Reading from the N-terminus, the 271-residue chain is Endonuclease V (271 aa).

The interval 46–67 (TRTGDAPDVDQTTLSTSADDRT) is disordered. 2 residues coordinate Mg(2+): D76 and D140.

The protein belongs to the endonuclease V family. The cofactor is Mg(2+).

It is found in the cytoplasm. It carries out the reaction Endonucleolytic cleavage at apurinic or apyrimidinic sites to products with a 5'-phosphate.. Its function is as follows. DNA repair enzyme involved in the repair of deaminated bases. Selectively cleaves double-stranded DNA at the second phosphodiester bond 3' to a deoxyinosine leaving behind the intact lesion on the nicked DNA. In Haloarcula marismortui (strain ATCC 43049 / DSM 3752 / JCM 8966 / VKM B-1809) (Halobacterium marismortui), this protein is Endonuclease V.